We begin with the raw amino-acid sequence, 768 residues long: Protein ITPRID2 (768 aa).

Disordered stretches follow at residues 1–24 (MTTEDHLLRTASQHSDSSGFAEDS), 39–78 (LQAMGSSADSCDSETTVTSLGEDLATPTAQDQPYFNESEE), and 98–124 (RKSGSQDFPQCNTIENPGTKQSTCSPG). Composition is skewed to polar residues over residues 39–57 (LQAMGSSADSCDSETTVTS) and 102–122 (SQDFPQCNTIENPGTKQSTCS). Residues Ser-153, Ser-177, Ser-246, Ser-248, Ser-255, Ser-268, Ser-276, and Ser-312 each carry the phosphoserine modification. The tract at residues 315–338 (SVKKEEAPQSEAPRVEECHHGRTP) is disordered. The span at 316-334 (VKKEEAPQSEAPRVEECHH) shows a compositional bias: basic and acidic residues. Lys-317 is covalently cross-linked (Glycyl lysine isopeptide (Lys-Gly) (interchain with G-Cter in SUMO2)). Residues Ser-378 and Ser-411 each carry the phosphoserine modification. A coiled-coil region spans residues 468–546 (QELQVMRRSL…GLEEQLRAVR (79 aa)). Phosphoserine occurs at positions 549, 564, 569, 572, 627, and 643. Disordered stretches follow at residues 605–647 (IPPG…VGKP) and 663–718 (ALTP…AAEE). The span at 610-627 (SSESVFSQATSESSSVCS) shows a compositional bias: polar residues. Thr-665 bears the Phosphothreonine mark. Over residues 667–677 (TAPSRTGSVQT) the composition is skewed to polar residues. A Phosphoserine modification is found at Ser-670. Residue Thr-677 is modified to Phosphothreonine. Positions 682–694 (ESSEEVDAAEEAP) are enriched in acidic residues.

The protein resides in the cytoplasm. This Pongo abelii (Sumatran orangutan) protein is Protein ITPRID2.